Consider the following 375-residue polypeptide: Alcohol dehydrogenase 1A (375 aa).

S2 bears the N-acetylserine mark. The residue at position 23 (S23) is a Phosphoserine. C47 contacts Zn(2+). 48–52 is an NAD(+) binding site; it reads GTDDH. H68, C98, C101, C104, C112, and C175 together coordinate Zn(2+). NAD(+)-binding positions include 200–205, D224, K229, I270, 293–295, 318–320, and R370; these read GLGGVG, VGV, and AIL.

Belongs to the zinc-containing alcohol dehydrogenase family. Dimer of identical or heterodimer of closely related subunits alpha, beta, or gamma that are encoded by genes ADH1A, ADH1B, and ADH1C, respectively. Zn(2+) is required as a cofactor.

Its subcellular location is the cytoplasm. The catalysed reaction is a primary alcohol + NAD(+) = an aldehyde + NADH + H(+). It catalyses the reaction a secondary alcohol + NAD(+) = a ketone + NADH + H(+). The enzyme catalyses butan-1-ol + NAD(+) = butanal + NADH + H(+). It carries out the reaction 1-propanol + NAD(+) = propanal + NADH + H(+). In terms of biological role, alcohol dehydrogenase. Oxidizes primary as well as secondary alcohols. Ethanol is a very poor substrate. The sequence is that of Alcohol dehydrogenase 1A (ADH1A) from Homo sapiens (Human).